A 310-amino-acid polypeptide reads, in one-letter code: Malate dehydrogenase (310 aa).

NAD(+) is bound by residues 7–12 (GAGNVG) and Asp-32. The substrate site is built by Arg-81 and Arg-87. NAD(+)-binding positions include Asn-94 and 117-119 (VSN). Residues Asn-119 and Arg-150 each contribute to the substrate site. His-174 functions as the Proton acceptor in the catalytic mechanism.

It belongs to the LDH/MDH superfamily. MDH type 3 family.

It catalyses the reaction (S)-malate + NAD(+) = oxaloacetate + NADH + H(+). Catalyzes the reversible oxidation of malate to oxaloacetate. The sequence is that of Malate dehydrogenase from Chlorobium phaeobacteroides (strain DSM 266 / SMG 266 / 2430).